A 274-amino-acid chain; its full sequence is MTQQLQTLIDNAWDNRASLSPSAAPKEVVDAVEHVIAELNNGRLRVATREGVGQWTVHQWIKKAVLLSFRLKDNELMKAGDLGFFDKVPTKFAHLSADEMAATGVRVVPPAVARRGSFIAKGAILMPSYVNIGAYVDEGTMVDTWATVGSCAQVGKNVHLSGGVGLGGVLEPLQANPTIIEDNCFIGARSEVVEGVIVEENSVISMGVYIGQSTPIYDRTTGEITYGRVPAGSVVVSGNLPKDGGRYSMYAAIIVKKVDAKTRSTTSLNDLLRD.

Residues Arg106 and Asp143 each coordinate substrate.

The protein belongs to the transferase hexapeptide repeat family. Homotrimer.

It is found in the cytoplasm. The enzyme catalyses (S)-2,3,4,5-tetrahydrodipicolinate + succinyl-CoA + H2O = (S)-2-succinylamino-6-oxoheptanedioate + CoA. Its pathway is amino-acid biosynthesis; L-lysine biosynthesis via DAP pathway; LL-2,6-diaminopimelate from (S)-tetrahydrodipicolinate (succinylase route): step 1/3. In Acidovorax sp. (strain JS42), this protein is 2,3,4,5-tetrahydropyridine-2,6-dicarboxylate N-succinyltransferase.